Here is a 385-residue protein sequence, read N- to C-terminus: Centrosomal protein of 44 kDa (385 aa).

Residues 11–192 (RNLEQVLRSL…GANIPEDTVT (182 aa)) form a binds with microtubules and centrioles region. The segment at 126–154 (LEKTPSQQRKKTSSAKSEPCSSTEKTSTE) is disordered. The segment covering 139–154 (SAKSEPCSSTEKTSTE) has biased composition (polar residues). A coiled-coil region spans residues 230–271 (EVTALQSMLAECQEKLKKLTCIESRLESLEEKMKGKVLVNEK). The segment at 303 to 348 (SEDYSSSSDMDSLNPDRKSKEERHANIPLSSGYSTVSSDSTPRTST) is disordered. A compositionally biased stretch (low complexity) spans 305 to 314 (DYSSSSDMDS). Over residues 316-327 (NPDRKSKEERHA) the composition is skewed to basic and acidic residues. A compositionally biased stretch (low complexity) spans 332-342 (SSGYSTVSSDS). Residue serine 342 is modified to Phosphoserine. Threonine 343 carries the phosphothreonine modification. The stretch at 358-381 (SEETTMQKMERMKKMFEETAELLK) forms a coiled coil.

As to quaternary structure, interacts with CROCC. Interacts with POC1B; the interaction is direct and recruits POC1B to centriolar microtubules. Binds to centriolar microtubules.

Its subcellular location is the cytoplasm. The protein resides in the cytoskeleton. It localises to the microtubule organizing center. The protein localises to the centrosome. It is found in the centriole. Its subcellular location is the spindle pole. The protein resides in the midbody. In terms of biological role, centriole-enriched microtubule-binding protein involved in centriole biogenesis. In collaboration with CEP295 and POC1B, is required for the centriole-to-centrosome conversion by ensuring the formation of bona fide centriole wall. Functions as a linker component that maintains centrosome cohesion. Associates with CROCC and regulates its stability and localization to the centrosome. This chain is Centrosomal protein of 44 kDa (CEP44), found in Bos taurus (Bovine).